Here is a 507-residue protein sequence, read N- to C-terminus: Alkyl hydroperoxide reductase subunit F (507 aa).

207–222 (DVLIVGGGPASGSAAI) lines the FAD pocket. An intrachain disulfide couples C335 to C338. 347–361 (DVAVIGGGNSGVEAA) contributes to the NAD(+) binding site. 467–477 (TNVPGIFAAGD) serves as a coordination point for FAD.

Belongs to the class-II pyridine nucleotide-disulfide oxidoreductase family. As to quaternary structure, homodimer. It depends on FAD as a cofactor.

Functionally, serves to protect the cell against DNA damage by alkyl hydroperoxides. It can use either NADH or NADPH as electron donor for direct reduction of redox dyes or of alkyl hydroperoxides when combined with the AhpC protein. This chain is Alkyl hydroperoxide reductase subunit F (ahpF), found in Staphylococcus aureus (strain Mu50 / ATCC 700699).